Consider the following 99-residue polypeptide: High mobility group nucleosome-binding domain-containing protein 3 (99 aa).

2 stretches are compositionally biased toward basic and acidic residues: residues 1 to 25 and 39 to 53; these read MPKR…EPTR and PESK…KEPG. A disordered region spans residues 1–99; sequence MPKRKSPENT…RTESIEKEGE (99 aa). Position 6 is a phosphoserine (serine 6). Threonine 10 is subject to Phosphothreonine. Serine 78 and serine 93 each carry phosphoserine. The span at 83–99 shows a compositional bias: basic and acidic residues; that stretch reads TKVEEAQRTESIEKEGE.

This sequence belongs to the HMGN family. As to quaternary structure, interacts with the ligand binding domain of the thyroid receptor (TR) (in vitro). Requires the presence of thyroid hormone for its interaction. Interacts with transcriptional regulator SEHBP. Interacts with nucleosomes. In terms of tissue distribution, expressed in the brain, eye, prostate, thyroid, kidney, testis, glial cells and insulin-producing cells of the Langerhans pancreatic islets. In the brain, expressed in the lateral olfactory tract, anterior commissure, corpus callosum, internal capsule, fornix, stria medullans, optic tract, axon bundles, Purkinje cell layer and granular layer of the cerebellum. In retina, expressed in the nuclei of cells in the inner nuclear layer including amacrine, bipolar and horizontal neurons and in the nuclei of ganglion neurons. Detected at low levels in the liver.

It is found in the nucleus. Binds to nucleosomes, regulating chromatin structure and consequently, chromatin-dependent processes such as transcription, DNA replication and DNA repair. Affects both insulin and glucagon levels and modulates the expression of pancreatic genes involved in insulin secretion. Regulates the expression of the glucose transporter SLC2A2 by binding specifically to its promoter region and recruiting PDX1 and additional transcription factors. Regulates the expression of SLC6A9, a glycine transporter which regulates the glycine concentration in synaptic junctions in the central nervous system, by binding to its transcription start site. May play a role in ocular development and astrocyte function. The polypeptide is High mobility group nucleosome-binding domain-containing protein 3 (Hmgn3) (Mus musculus (Mouse)).